A 103-amino-acid polypeptide reads, in one-letter code: Integration host factor subunit alpha (103 aa).

Residues 50–72 (GNFNLRDKGERPGRNPKTGEEIP) are disordered. Residues 54–69 (LRDKGERPGRNPKTGE) are compositionally biased toward basic and acidic residues.

This sequence belongs to the bacterial histone-like protein family. Heterodimer of an alpha and a beta chain.

In terms of biological role, this protein is one of the two subunits of integration host factor, a specific DNA-binding protein that functions in genetic recombination as well as in transcriptional and translational control. The chain is Integration host factor subunit alpha from Coxiella burnetii (strain CbuK_Q154) (Coxiella burnetii (strain Q154)).